Here is a 103-residue protein sequence, read N- to C-terminus: uncharacterized protein (103 aa).

The disordered stretch occupies residues 1–103 (MAGARRRARC…WRGGSCTSQR (103 aa)). 2 stretches are compositionally biased toward basic residues: residues 55 to 65 (RRPGPGRRARS) and 74 to 84 (RPPHSRTRARR).

Belongs to the epstein-barr virus RPMS1 family.

This is an uncharacterized protein from Epstein-Barr virus (strain GD1) (HHV-4).